A 569-amino-acid polypeptide reads, in one-letter code: Proline--tRNA ligase (569 aa).

This sequence belongs to the class-II aminoacyl-tRNA synthetase family. ProS type 1 subfamily. Homodimer.

The protein resides in the cytoplasm. The enzyme catalyses tRNA(Pro) + L-proline + ATP = L-prolyl-tRNA(Pro) + AMP + diphosphate. Functionally, catalyzes the attachment of proline to tRNA(Pro) in a two-step reaction: proline is first activated by ATP to form Pro-AMP and then transferred to the acceptor end of tRNA(Pro). As ProRS can inadvertently accommodate and process non-cognate amino acids such as alanine and cysteine, to avoid such errors it has two additional distinct editing activities against alanine. One activity is designated as 'pretransfer' editing and involves the tRNA(Pro)-independent hydrolysis of activated Ala-AMP. The other activity is designated 'posttransfer' editing and involves deacylation of mischarged Ala-tRNA(Pro). The misacylated Cys-tRNA(Pro) is not edited by ProRS. This Campylobacter jejuni subsp. jejuni serotype O:23/36 (strain 81-176) protein is Proline--tRNA ligase.